Here is a 135-residue protein sequence, read N- to C-terminus: PTS system sorbose-specific EIIA component (135 aa).

A PTS EIIA type-4 domain is found at 1–131; sequence MVHAIFCAHG…CVVWQQPETV (131 aa). H9 functions as the Tele-phosphohistidine intermediate in the catalytic mechanism. Position 9 is a phosphohistidine; by HPr (H9).

Its subcellular location is the cytoplasm. Functionally, the phosphoenolpyruvate-dependent sugar phosphotransferase system (PTS), a major carbohydrate active transport system, catalyzes the phosphorylation of incoming sugar substrates concomitant with their translocation across the cell membrane. The enzyme II SorABFM PTS system is involved in L-sorbose transport. This is PTS system sorbose-specific EIIA component from Klebsiella pneumoniae.